We begin with the raw amino-acid sequence, 553 residues long: Formate--tetrahydrofolate ligase (553 aa).

Residue 62–69 (TPAGEGKS) coordinates ATP.

It belongs to the formate--tetrahydrofolate ligase family.

It catalyses the reaction (6S)-5,6,7,8-tetrahydrofolate + formate + ATP = (6R)-10-formyltetrahydrofolate + ADP + phosphate. It functions in the pathway one-carbon metabolism; tetrahydrofolate interconversion. This chain is Formate--tetrahydrofolate ligase, found in Pediococcus pentosaceus (strain ATCC 25745 / CCUG 21536 / LMG 10740 / 183-1w).